Here is a 259-residue protein sequence, read N- to C-terminus: NADPH-dependent reductase BacG (259 aa).

NADP(+) contacts are provided by residues 12-15, 34-36, 62-63, I90, K113, and 185-191; these read SQGI, SRN, DM, and GFIATDR.

This sequence belongs to the short-chain dehydrogenases/reductases (SDR) family. In terms of assembly, homodimer.

The protein resides in the cytoplasm. Its pathway is antibiotic biosynthesis; bacilysin biosynthesis. In terms of biological role, along with the bacABCDEF operon, BacG is involved in the biosynthesis of the nonribosomally synthesized dipeptide antibiotic bacilysin, composed of L-alanine and L-anticapsin. Bacilysin is an irreversible inactivator of the glutaminase domain of glucosamine synthetase. BacG catalyzes the stereoselective reduction of exocyclic-delta(3),delta(5)-dihydro-hydroxyphenylpyruvate (ex-H2HPP), adding a pro-S hydride equivalent to C4 position to yield tetrahydro-hydroxyphenylpyruvate (H4HPP). Although the 3Z,7R-ex-H2HPP isomer is kinetically disfavored by BacB and produced in a smaller quantity than 3E,7R-ex-H2HPP, it is the preferred substrate for the conjugate reduction reaction of BacG. The sequence is that of NADPH-dependent reductase BacG from Bacillus subtilis (strain 168).